We begin with the raw amino-acid sequence, 296 residues long: MIFKQYLQVTKPGIIFGNLISVIGGFLLASKGSIDYPLFIYTLVGVSLVVASGCVFNNYIDRDIDRKMERTKNRVLVKGLISPAVSLVYATLLGIAGFMLLWFGANPLACWLGVMGFVVYVGVYSLYMKRHSVYGTLIGSLSGAAPPVIGYCAVTGEFDSGAAILLAIFSLWQMPHSYAIAIFRFKDYQAANIPVLPVVKGISVAKNHITLYIIAFAVATLMLSLGGYAGYKYLVVAAAVSVWWLGMALRGYKVADDRIWARKLFGFSIIAITALSVMMSVDFMVPDSHTLLAAVW.

Residues 1 to 9 lie on the Cytoplasmic side of the membrane; sequence MIFKQYLQV. A helical membrane pass occupies residues 10–28; sequence TKPGIIFGNLISVIGGFLL. Topologically, residues 29 to 37 are periplasmic; it reads ASKGSIDYP. The helical transmembrane segment at 38–56 threads the bilayer; sequence LFIYTLVGVSLVVASGCVF. The Cytoplasmic portion of the chain corresponds to 57–78; it reads NNYIDRDIDRKMERTKNRVLVK. The chain crosses the membrane as a helical span at residues 79–97; the sequence is GLISPAVSLVYATLLGIAG. The Periplasmic portion of the chain corresponds to 98 to 107; sequence FMLLWFGANP. A helical membrane pass occupies residues 108–126; it reads LACWLGVMGFVVYVGVYSL. The Cytoplasmic portion of the chain corresponds to 127 to 197; sequence YMKRHSVYGT…YQAANIPVLP (71 aa). The helical transmembrane segment at 198–216 threads the bilayer; the sequence is VVKGISVAKNHITLYIIAF. Over 217–228 the chain is Periplasmic; the sequence is AVATLMLSLGGY. The chain crosses the membrane as a helical span at residues 229 to 247; the sequence is AGYKYLVVAAAVSVWWLGM. Residues 248–268 lie on the Cytoplasmic side of the membrane; the sequence is ALRGYKVADDRIWARKLFGFS. Residues 269–287 traverse the membrane as a helical segment; sequence IIAITALSVMMSVDFMVPD. Over 288–296 the chain is Periplasmic; that stretch reads SHTLLAAVW.

It belongs to the UbiA prenyltransferase family. Protoheme IX farnesyltransferase subfamily.

The protein resides in the cell inner membrane. The catalysed reaction is heme b + (2E,6E)-farnesyl diphosphate + H2O = Fe(II)-heme o + diphosphate. It participates in porphyrin-containing compound metabolism; heme O biosynthesis; heme O from protoheme: step 1/1. Functionally, converts heme B (protoheme IX) to heme O by substitution of the vinyl group on carbon 2 of heme B porphyrin ring with a hydroxyethyl farnesyl side group. In Escherichia coli O1:K1 / APEC, this protein is Protoheme IX farnesyltransferase.